A 401-amino-acid chain; its full sequence is MQVSIACTEHNLKSRNGEERLISKQNAAAPNVVNAARAKFRTVAIIARSLGTFTPQHHISLKESTAKQTGMKYRNLGKSGLRVSCLGLGTWVTFGGQISDEVAEQLMTIAYESGVNLFDTAEVYAAGKAEVILGNILKKKGWRRSSLVITTKLYWGGKAETERGLSRKHIIEGLRASLQRLQLEYVDVVFANRPDNNTPMEEIVRAMTHVINQGMAMYWGTSRWSAMEIMEAYSVARQFNLIPPVCEQAEYHLFQREKVEVQLPELYHKIGVGAMTWSPLACGIISGKYGNGVPESSRAALKCYQWLKEKIISEEGRKQQTKLKDLSPIAERLGCTLPQLAVAWCLRNEGVSSVLLGSSNPEQLIENLGAIQVLPKMTSHIVNEIDNILGNKPYSKKDYRS.

Residues Thr90, Trp91, Gln97, and Asp119 each coordinate NADP(+). Residue Tyr124 is the Proton donor/acceptor of the active site. Residues Asn192, Ser222, Arg223, Gln248, Trp277, Ser278, Pro279, Leu280, Ala281, Cys282, Lys288, Arg298, Gly357, Ser359, Gln363, Glu366, and Asn367 each contribute to the NADP(+) site.

This sequence belongs to the shaker potassium channel beta subunit family. Homotetramer. Interaction with tetrameric potassium channel alpha subunits gives rise to a heterooctamer.

Its subcellular location is the cytoplasm. It is found in the membrane. The protein localises to the cell membrane. It catalyses the reaction a primary alcohol + NADP(+) = an aldehyde + NADPH + H(+). The catalysed reaction is a secondary alcohol + NADP(+) = a ketone + NADPH + H(+). Regulatory subunit of the voltage-gated potassium (Kv) channels composed of pore-forming and potassium-conducting alpha subunits and of regulatory beta subunits. The beta-1/KCNAB1 cytoplasmic subunit mediates closure of delayed rectifier potassium channels by physically obstructing the pore via its N-terminal domain and increases the speed of channel closure for other family members. Promotes the inactivation of KCNA1, KCNA2, KCNA4, KCNA5 and KCNA6 alpha subunit-containing channels. Displays nicotinamide adenine dinucleotide phosphate (NADPH)-dependent aldoketoreductase activity by catalyzing the NADPH-dependent reduction of a variety of endogenous aldehydes and ketones. The binding of NADPH is required for efficient down-regulation of potassium channel activity. Oxidation of the bound NADPH restrains N-terminal domain from blocking the channel, thereby decreasing N-type inactivation of potassium channel activity. The chain is Voltage-gated potassium channel subunit beta-1 (KCNAB1) from Gallus gallus (Chicken).